The sequence spans 520 residues: MRAFRSAANFGAASNIYRKSFTPASIASNRFVSARMSSIMTDNARPNTDKVVQDIADYIHDYKIDSSVAMETARLCFLDTLGCGLEGLKYQQCANIVGPVVPGTIVPNGTKVPGTDYQVDPVRGAFNIGTIIRWLDFNDCWLAAEWGHPSDNLGGILAVADWQTRSAKAGLEGKVFKVKDVLEGMIKAHEIQGGLAIENSFNRVGLDHVVLVKIASTAVVSGMLGLSREQTADAISQAFVDGQSLRTYRHAPNTMSRKSWAAGDATSRAVNLALLVKKGEGGMPSILTAKTWGFYDVLFGGKEFKFQRPYGSYVMENVLFKISFPAEFHAQTACESAMLLHEELKKLGKTSDDIASIKIRTQEAAMRIIDKKGPLHNYADRDHCIQYMVAIPLIHGRLTADDYTDEIASDPRIDALREKMECVEDKRFSEEYHAPDKRYIGNAIEITLKDGTVLDEIEVNYPIGHRQRREEGTPVLLEKFARHLRGRFPEGQVEKILAASNQDIVNMDIDEYVDLYVKKD.

A mitochondrion-targeting transit peptide spans 1 to 37 (MRAFRSAANFGAASNIYRKSFTPASIASNRFVSARMS).

The protein belongs to the PrpD family. In terms of assembly, monomer.

The protein localises to the mitochondrion. The catalysed reaction is (2S,3S)-2-methylcitrate = 2-methyl-cis-aconitate + H2O. The protein operates within organic acid metabolism; propanoate degradation. With respect to regulation, several bivalent metal ions, such as nickel, copper, zinc, mercury, and lead, inhibit the activity to some extent. Inhibited by structural analogs such as citrate, cis-aconitate, isocitrate, 2-methylisocitrate, tricarballylate and fluorocitrate, but not by trans-aconitate or adipate. Component of the methylcitrate cycle that catalyzes the dehydration of 2-methylcitrate to 2-methyl-cis-aconitate. The methylcitrate cycle is a metabolic pathway for the consumption of propionic acid. The sequence is that of 2-methylcitrate dehydratase, mitochondrial from Yarrowia lipolytica (strain CLIB 122 / E 150) (Yeast).